The chain runs to 176 residues: NAD(P)H-quinone oxidoreductase subunit 6, chloroplastic (176 aa).

5 helical membrane-spanning segments follow: residues Phe-10–Pro-30, Pro-32–Leu-52, Ala-61–Met-81, Leu-92–Met-112, and Phe-152–Ser-172.

Belongs to the complex I subunit 6 family. As to quaternary structure, NDH is composed of at least 16 different subunits, 5 of which are encoded in the nucleus.

It localises to the plastid. The protein resides in the chloroplast thylakoid membrane. The enzyme catalyses a plastoquinone + NADH + (n+1) H(+)(in) = a plastoquinol + NAD(+) + n H(+)(out). It carries out the reaction a plastoquinone + NADPH + (n+1) H(+)(in) = a plastoquinol + NADP(+) + n H(+)(out). NDH shuttles electrons from NAD(P)H:plastoquinone, via FMN and iron-sulfur (Fe-S) centers, to quinones in the photosynthetic chain and possibly in a chloroplast respiratory chain. The immediate electron acceptor for the enzyme in this species is believed to be plastoquinone. Couples the redox reaction to proton translocation, and thus conserves the redox energy in a proton gradient. This is NAD(P)H-quinone oxidoreductase subunit 6, chloroplastic (ndhG) from Capsella bursa-pastoris (Shepherd's purse).